The following is a 496-amino-acid chain: Ribose import ATP-binding protein RbsA (496 aa).

ABC transporter domains follow at residues Ile-3–Glu-239 and Glu-246–Asn-493. Gly-35 to Ser-42 contributes to the ATP binding site.

It belongs to the ABC transporter superfamily. Ribose importer (TC 3.A.1.2.1) family. In terms of assembly, the complex is composed of an ATP-binding protein (RbsA), two transmembrane proteins (RbsC) and a solute-binding protein (RbsB).

It is found in the cell membrane. It catalyses the reaction D-ribose(out) + ATP + H2O = D-ribose(in) + ADP + phosphate + H(+). Part of the ABC transporter complex RbsABC involved in ribose import. Responsible for energy coupling to the transport system. The protein is Ribose import ATP-binding protein RbsA of Oceanobacillus iheyensis (strain DSM 14371 / CIP 107618 / JCM 11309 / KCTC 3954 / HTE831).